A 632-amino-acid chain; its full sequence is tRNA uridine 5-carboxymethylaminomethyl modification enzyme MnmG (632 aa).

Residues 15–20 (GAGHAG), valine 127, and serine 182 each bind FAD. Residue 276–290 (GARYCPSIEDKIVRF) coordinates NAD(+). Glutamine 373 is a binding site for FAD.

Belongs to the MnmG family. As to quaternary structure, homodimer. Heterotetramer of two MnmE and two MnmG subunits. It depends on FAD as a cofactor.

It localises to the cytoplasm. In terms of biological role, NAD-binding protein involved in the addition of a carboxymethylaminomethyl (cmnm) group at the wobble position (U34) of certain tRNAs, forming tRNA-cmnm(5)s(2)U34. This Enterococcus faecalis (strain ATCC 700802 / V583) protein is tRNA uridine 5-carboxymethylaminomethyl modification enzyme MnmG.